We begin with the raw amino-acid sequence, 342 residues long: Uricase (342 aa).

Catalysis depends on charge relay system residues Lys-35 and Thr-80. The urate site is built by Thr-80, Asp-81, Phe-204, Arg-221, Val-269, Gln-270, and Asn-296. His-298 (charge relay system) is an active-site residue. The Microbody targeting signal motif lies at 340-342 (SHL).

It belongs to the uricase family. In terms of tissue distribution, malpighian tubules.

The protein resides in the peroxisome. The enzyme catalyses urate + O2 + H2O = 5-hydroxyisourate + H2O2. It participates in purine metabolism; urate degradation; (S)-allantoin from urate: step 1/3. With respect to regulation, repressed by 20-hydroxyecdysone. Functionally, catalyzes the oxidation of uric acid to 5-hydroxyisourate, which is further processed to form (S)-allantoin. The polypeptide is Uricase (Uro) (Drosophila virilis (Fruit fly)).